The sequence spans 238 residues: U2 small nuclear ribonucleoprotein A' (238 aa).

LRR repeat units follow at residues 53 to 74 (PTHI…SRRD), 75 to 95 (DIHT…RLLP), and 97 to 118 (NVQN…QRLR). The 39-residue stretch at 132 to 170 (NQVCHLANYREHVLRLVPHLETLDFQNVTAEERKSAMSF) folds into the LRRCT domain. The segment at 167-189 (AMSFPRQADGDTLGPVNTAIRDN) is disordered.

It belongs to the U2 small nuclear ribonucleoprotein A family. As to quaternary structure, belongs to the CWC complex (or CEF1-associated complex), a spliceosome sub-complex reminiscent of a late-stage spliceosome composed of the U2, U5 and U6 snRNAs and at least BUD13, BUD31, BRR2, CDC40, CEF1, CLF1, CUS1, CWC2, CWC15, CWC21, CWC22, CWC23, CWC24, CWC25, CWC27, ECM2, HSH155, IST3, ISY1, LEA1, MSL1, NTC20, PRP8, PRP9, PRP11, PRP19, PRP21, PRP22, PRP45, PRP46, SLU7, SMB1, SMD1, SMD2, SMD3, SMX2, SMX3, SNT309, SNU114, SPP2, SYF1, SYF2, RSE1 and YJU2. Interacts with MSL1.

The protein localises to the nucleus. In terms of biological role, involved in pre-mRNA splicing. Associates to U2 snRNA in a MSL1 dependent manner and is required for normal accumulation of U2 snRNA. Required for the spliceosome assembly and the efficient addition of U2 snRNP onto the pre-mRNA. In Saccharomyces cerevisiae (strain ATCC 204508 / S288c) (Baker's yeast), this protein is U2 small nuclear ribonucleoprotein A' (LEA1).